The primary structure comprises 242 residues: Caffeoyl-CoA O-methyltransferase 2 (242 aa).

Position 16 (lysine 16) interacts with substrate. Residues threonine 58, glutamate 80, glycine 82–valine 83, serine 88, aspartate 106, and alanine 135 each bind S-adenosyl-L-methionine. Aspartate 158 lines the substrate pocket. Position 158 (aspartate 158) interacts with a divalent metal cation. Aspartate 160 provides a ligand contact to S-adenosyl-L-methionine. Residues aspartate 184 and asparagine 185 each contribute to the a divalent metal cation site. Residue asparagine 189 coordinates substrate.

It belongs to the class I-like SAM-binding methyltransferase superfamily. Cation-dependent O-methyltransferase family. CCoAMT subfamily. It depends on a divalent metal cation as a cofactor. In terms of tissue distribution, mostly expressed in petal limbs and tubes, and, at low levels, in stems, roots and leaves.

It localises to the cytoplasm. The protein localises to the cytosol. It carries out the reaction (E)-caffeoyl-CoA + S-adenosyl-L-methionine = (E)-feruloyl-CoA + S-adenosyl-L-homocysteine + H(+). It catalyses the reaction (E)-5-hydroxyferuloyl-CoA + S-adenosyl-L-methionine = (E)-sinapoyl-CoA + S-adenosyl-L-homocysteine + H(+). The protein operates within aromatic compound metabolism; phenylpropanoid biosynthesis. In terms of biological role, involved in the production of floral volatile phenylpropanoids in flowers of fragrant cultivars (e.g. cv. Mitchell and cv. V26) from cinnamic acid, a common precursor with the anthocyanin biosynthesis pathway involved in flower pigmentation. Methylates caffeoyl-CoA to feruloyl-CoA, also able to methylate 5-hydroxyferuloyl-CoA. This Petunia hybrida (Petunia) protein is Caffeoyl-CoA O-methyltransferase 2.